The chain runs to 73 residues: Small proline-rich protein 2G (73 aa).

Low complexity predominate over residues 1–11; that stretch reads MSYQQQQCKQP. A disordered region spans residues 1–20; sequence MSYQQQQCKQPCQPPPVCPT. A run of 3 repeats spans residues 21–29, 30–38, and 39–47. The tract at residues 21–47 is 3 X 9 AA approximate tandem repeats; the sequence is PKCPEPCPPPKCPEPYLPPPCPPEHCP.

The protein belongs to the cornifin (SPRR) family.

It is found in the cytoplasm. Cross-linked envelope protein of keratinocytes. It is a keratinocyte protein that first appears in the cell cytosol, but ultimately becomes cross-linked to membrane proteins by transglutaminase. All that results in the formation of an insoluble envelope beneath the plasma membrane. This is Small proline-rich protein 2G (SPRR2G) from Homo sapiens (Human).